The following is a 949-amino-acid chain: Protocadherin alpha-11 (949 aa).

Positions 1-29 are cleaved as a signal peptide; the sequence is MFGFQRRGLGTPRLQLWLLLLEFWEVGSG. Cadherin domains lie at 30–133, 157–242, 243–349, 350–454, 455–564, and 580–677; these read QLHY…PPVF, ASDA…DPDF, DKSE…SPEV, AVTS…APAF, AQPE…APAL, and VPRS…APKA. Over 30 to 696 the chain is Extracellular; it reads QLHYSVSEEA…SPEAALVDVN (667 aa). N-linked (GlcNAc...) asparagine glycans are attached at residues Asn-265 and Asn-304. N-linked (GlcNAc...) asparagine glycosylation is present at Asn-547. Residues 697–717 traverse the membrane as a helical segment; that stretch reads VYLIIAICVVSSLLVLTLLLY. Topologically, residues 718–949 are cytoplasmic; sequence TALWCSATPT…GNSTTDNSDQ (232 aa). PXXP repeat units follow at residues 733 to 736 and 773 to 776; these read PGKP and PSLP. Residues 733–893 are 6 X 4 AA repeats of P-X-X-P; that stretch reads PGKPTLVCSR…PDKFIIPGSP (161 aa). Disordered stretches follow at residues 753-807, 826-858, and 870-889; these read RRQR…DWRY, ILRA…PPVG, and YGPG…KFII. Residues 780–789 are compositionally biased toward basic and acidic residues; sequence NKEEEGERQE. PXXP repeat units follow at residues 795–798, 831–834, 872–875, and 890–893; these read PGQP, PGGP, PGNP, and PGSP. Residues 900–949 are disordered; the sequence is QEPANSQIDKSDFITFGKKEETKKKKKKKKGNKTQEKKEKGNSTTDNSDQ. The segment covering 908-922 has biased composition (basic and acidic residues); that stretch reads DKSDFITFGKKEETK.

The protein localises to the cell membrane. Functionally, potential calcium-dependent cell-adhesion protein. May be involved in the establishment and maintenance of specific neuronal connections in the brain. The protein is Protocadherin alpha-11 (PCDHA11) of Pan troglodytes (Chimpanzee).